A 130-amino-acid chain; its full sequence is Large ribosomal subunit protein bL12 (130 aa).

Belongs to the bacterial ribosomal protein bL12 family. Homodimer. Part of the ribosomal stalk of the 50S ribosomal subunit. Forms a multimeric L10(L12)X complex, where L10 forms an elongated spine to which 2 to 4 L12 dimers bind in a sequential fashion. Binds GTP-bound translation factors.

Its function is as follows. Forms part of the ribosomal stalk which helps the ribosome interact with GTP-bound translation factors. Is thus essential for accurate translation. This Cutibacterium acnes (strain DSM 16379 / KPA171202) (Propionibacterium acnes) protein is Large ribosomal subunit protein bL12.